We begin with the raw amino-acid sequence, 269 residues long: Regulatory protein RecX (269 aa).

This sequence belongs to the RecX family.

It localises to the cytoplasm. Functionally, modulates RecA activity. The polypeptide is Regulatory protein RecX (Listeria monocytogenes serotype 4b (strain CLIP80459)).